The primary structure comprises 290 residues: Glutamate racemase (290 aa).

Residues 32-33 (DS) and 64-65 (YG) contribute to the substrate site. The active-site Proton donor/acceptor is the cysteine 96. 97 to 98 (NT) is a substrate binding site. The Proton donor/acceptor role is filled by cysteine 208. Residue 209–210 (TH) participates in substrate binding.

This sequence belongs to the aspartate/glutamate racemases family.

The enzyme catalyses L-glutamate = D-glutamate. It functions in the pathway cell wall biogenesis; peptidoglycan biosynthesis. In terms of biological role, provides the (R)-glutamate required for cell wall biosynthesis. This chain is Glutamate racemase, found in Sodalis glossinidius (strain morsitans).